Here is a 766-residue protein sequence, read N- to C-terminus: Sucrose synthase (766 aa).

The GT-B glycosyltransferase stretch occupies residues 220 to 698; the sequence is MVFNVVILSV…GLLRIKERYT (479 aa).

This sequence belongs to the glycosyltransferase 1 family. Plant sucrose synthase subfamily. In terms of tissue distribution, expressed most predominantly in tap root.

The catalysed reaction is an NDP-alpha-D-glucose + D-fructose = a ribonucleoside 5'-diphosphate + sucrose + H(+). Functionally, sucrose-cleaving enzyme that provides UDP-glucose and fructose for various metabolic pathways. The polypeptide is Sucrose synthase (SS1) (Beta vulgaris (Sugar beet)).